Here is a 132-residue protein sequence, read N- to C-terminus: MSSRREIRWGNARIYASQNNTIITITDITGAEIISKASGGMVVKADREKPSPYAAMLAANKAANDAFDKGISAIHIKVRAQGGYGSKTPGPGAQPAIRALARAGFIIGRIEDVTPLPHDTIRRPGGRRGRRV.

The protein belongs to the universal ribosomal protein uS11 family. As to quaternary structure, part of the 30S ribosomal subunit.

Functionally, located on the platform of the 30S subunit. The chain is Small ribosomal subunit protein uS11 from Sulfolobus acidocaldarius (strain ATCC 33909 / DSM 639 / JCM 8929 / NBRC 15157 / NCIMB 11770).